A 743-amino-acid polypeptide reads, in one-letter code: NAD(P)H-quinone oxidoreductase subunit 5, chloroplastic (743 aa).

The next 16 helical transmembrane spans lie at 9-29 (WIIP…LLFF), 40-60 (WAFI…DLSI), 89-109 (IDPL…LVLI), 125-145 (FAYM…SNFI), 147-167 (IYIF…FWFT), 185-205 (GDFG…SFEF), 219-239 (NEVN…GPVA), 258-278 (TPIS…FLVA), 280-300 (LLPL…IGII), 327-347 (LGYM…FHLI), 354-374 (ALLF…VGYF), 396-416 (TAFL…CFWS), 425-445 (WLYS…TAFY), 546-566 (ILFV…IGIP), 607-627 (LSVS…KPFY), and 721-741 (FYLL…FFFF).

The protein belongs to the complex I subunit 5 family. As to quaternary structure, NDH is composed of at least 16 different subunits, 5 of which are encoded in the nucleus.

The protein localises to the plastid. Its subcellular location is the chloroplast thylakoid membrane. It catalyses the reaction a plastoquinone + NADH + (n+1) H(+)(in) = a plastoquinol + NAD(+) + n H(+)(out). The catalysed reaction is a plastoquinone + NADPH + (n+1) H(+)(in) = a plastoquinol + NADP(+) + n H(+)(out). NDH shuttles electrons from NAD(P)H:plastoquinone, via FMN and iron-sulfur (Fe-S) centers, to quinones in the photosynthetic chain and possibly in a chloroplast respiratory chain. The immediate electron acceptor for the enzyme in this species is believed to be plastoquinone. Couples the redox reaction to proton translocation, and thus conserves the redox energy in a proton gradient. This Citrus sinensis (Sweet orange) protein is NAD(P)H-quinone oxidoreductase subunit 5, chloroplastic (ndhF).